The following is a 1447-amino-acid chain: DNA topoisomerase 2 (1447 aa).

ATP contacts are provided by residues N72, N101, 129–131 (SSN), and 142–149 (GRNGYGAK). Residues 323-325 (KKK) form an interaction with DNA region. Residue 357–359 (QTK) coordinates ATP. The 118-residue stretch at 435 to 552 (CTLILTEGDS…ELLRLPFLEE (118 aa)) folds into the Toprim domain. 3 residues coordinate Mg(2+): E441, D521, and D523. Positions 695 to 1169 (IPSLVDGLKP…TPEMLWLDDL (475 aa)) constitute a Topo IIA-type catalytic domain. The active-site O-(5'-phospho-DNA)-tyrosine intermediate is Y785. The tract at residues 972–981 (KLTTTLSTNQ) is interaction with DNA. 3 disordered regions span residues 1079–1110 (EDAEQADEEDEEEEEAAPSVSSKAKKEKEVDP), 1183–1231 (ERAE…DGEP), and 1246–1447 (AAAK…DFNC). Residues 1081–1094 (AEQADEEDEEEEEA) show a composition bias toward acidic residues. Residues 1255–1281 (KEPKKPKEPKEPKVKKEPKGKQIKAEP) are compositionally biased toward basic and acidic residues. A compositionally biased stretch (acidic residues) spans 1283 to 1293 (ASGDEVDEFDA). Phosphoserine is present on S1284. Composition is skewed to basic and acidic residues over residues 1310-1325 (VKKEPGEKKPRQKKEN) and 1332-1359 (SKIDFSKAKAKKSDDDVEEVTPRAERPG). S1344 bears the Phosphoserine mark. Position 1352 is a phosphothreonine (T1352). S1374, S1385, S1392, and S1396 each carry phosphoserine. A compositionally biased stretch (acidic residues) spans 1374–1394 (SDEEEDGGNVGSDDDGNASDD). The segment covering 1395–1408 (DSPKRPAKRGREDE) has biased composition (basic and acidic residues). Residues 1413 to 1423 (AKKKAPPKKRR) are compositionally biased toward basic residues. Over residues 1427–1447 (ESDDDDIEIDEDDDDDSDFNC) the composition is skewed to acidic residues.

Belongs to the type II topoisomerase family. As to quaternary structure, homodimer. Interacts with mod(mdg4). Interacts with barr. Interacts with ph-p. Interacts with mle; the interaction mediates association with the MSL dosage compensation complex. It depends on Mg(2+) as a cofactor. Mn(2+) serves as cofactor. The cofactor is Ca(2+). Post-translationally, phosphorylated. Phosphorylation by casein kinase II enhances ATPase activity.

The protein localises to the nucleus. It is found in the chromosome. It localises to the cytoplasm. It carries out the reaction ATP-dependent breakage, passage and rejoining of double-stranded DNA.. Its function is as follows. Control of topological states of DNA by transient breakage and subsequent rejoining of DNA strands. Topoisomerase II makes double-strand breaks. Essential during mitosis and meiosis for proper segregation of daughter chromosomes. During meiosis, it disrupts heterochromatic connections between achiasmate and chiasmate homologs after spindle assembly so that chromosomes can separate at prometaphase I. During mitosis, it functions in the separation of sister chromatids by establishing amphitelic kinetochore attachments in mitotic spindles. May have a role in chromatin condensation and chromosome structure. May be involved in X-chromosome dosage compensation, perhaps by modifying the topological state of compensated genes. Regulates activity of the gypsy chromatin insulator complex by binding to mod(mdg4) and preventing its degradation. The chain is DNA topoisomerase 2 from Drosophila melanogaster (Fruit fly).